The chain runs to 288 residues: Nucleotide-binding protein PM0169 (288 aa).

8 to 15 (GHSGAGKS) provides a ligand contact to ATP. A GTP-binding site is contributed by 56–59 (DIRN).

It belongs to the RapZ-like family.

Its function is as follows. Displays ATPase and GTPase activities. This chain is Nucleotide-binding protein PM0169, found in Pasteurella multocida (strain Pm70).